We begin with the raw amino-acid sequence, 968 residues long: RNA polymerase-associated protein RapA (968 aa).

The Helicase ATP-binding domain maps to 164–334 (EVGQRHAPRV…FARLRLLDPN (171 aa)). An ATP-binding site is contributed by 177-184 (DEVGLGKT). A DEAH box motif is present at residues 280-283 (DEAH). The 175-residue stretch at 490–664 (RVEWLLNYLV…AAPTEQEGLD (175 aa)) folds into the Helicase C-terminal domain.

This sequence belongs to the SNF2/RAD54 helicase family. RapA subfamily. As to quaternary structure, interacts with the RNAP. Has a higher affinity for the core RNAP than for the holoenzyme. Its ATPase activity is stimulated by binding to RNAP.

Functionally, transcription regulator that activates transcription by stimulating RNA polymerase (RNAP) recycling in case of stress conditions such as supercoiled DNA or high salt concentrations. Probably acts by releasing the RNAP, when it is trapped or immobilized on tightly supercoiled DNA. Does not activate transcription on linear DNA. Probably not involved in DNA repair. This is RNA polymerase-associated protein RapA from Serratia proteamaculans (strain 568).